A 1925-amino-acid polypeptide reads, in one-letter code: Cilia- and flagella-associated protein 65 (1925 aa).

The helical transmembrane segment at 188–208 threads the bilayer; the sequence is FFTVIPQPIFLSPGITLTLPI. Residues 877 to 986 form the MSP domain; that stretch reads QLKLDTHKSL…THYMLRLVGV (110 aa). A coiled-coil region spans residues 1525–1550; the sequence is SQQLMRQYHKELQEWKDEKVRQEVEF. Disordered regions lie at residues 1645–1667 and 1736–1823; these read KRKAPREESETSEEKSPNKWGPV and SSWE…PESQ. Composition is skewed to basic and acidic residues over residues 1649–1661 and 1739–1762; these read PREESETSEEKSP and EDGKGKQPKEDRPEHYPGLGKKEE. Residues 1763 to 1804 show a composition bias toward acidic residues; the sequence is GEEEKGEEEEEELEEEEEEEEETEEEELGKEEIEEKEEERDE.

It belongs to the CFAP65 family. Interacts with CFAP47.

Its subcellular location is the cell projection. The protein localises to the cilium. It is found in the flagellum membrane. The protein resides in the cytoplasmic vesicle. It localises to the secretory vesicle. Its subcellular location is the acrosome membrane. The protein localises to the cytoplasm. Functionally, plays a role in flagellar formation and sperm motility. This Homo sapiens (Human) protein is Cilia- and flagella-associated protein 65.